Here is a 294-residue protein sequence, read N- to C-terminus: GTPase Era (294 aa).

Residues lysine 4 to glutamate 170 form the Era-type G domain. Positions glycine 12–serine 19 are G1. Glycine 12–serine 19 contacts GTP. Residues glutamine 38–asparagine 42 form a G2 region. The G3 stretch occupies residues aspartate 59–glycine 62. GTP is bound by residues aspartate 59–isoleucine 63 and asparagine 121–aspartate 124. The segment at asparagine 121–aspartate 124 is G4. The interval isoleucine 149–alanine 151 is G5. The KH type-2 domain occupies threonine 201 to lysine 278.

Belongs to the TRAFAC class TrmE-Era-EngA-EngB-Septin-like GTPase superfamily. Era GTPase family. Monomer.

The protein localises to the cytoplasm. The protein resides in the cell inner membrane. In terms of biological role, an essential GTPase that binds both GDP and GTP, with rapid nucleotide exchange. Plays a role in 16S rRNA processing and 30S ribosomal subunit biogenesis and possibly also in cell cycle regulation and energy metabolism. This Halothermothrix orenii (strain H 168 / OCM 544 / DSM 9562) protein is GTPase Era.